We begin with the raw amino-acid sequence, 445 residues long: UPF0210 protein SEQ_0468 (445 aa).

Belongs to the UPF0210 family. Homodimer.

This Streptococcus equi subsp. equi (strain 4047) protein is UPF0210 protein SEQ_0468.